We begin with the raw amino-acid sequence, 231 residues long: ATP-dependent dethiobiotin synthetase BioD (231 aa).

12–17 contributes to the ATP binding site; that stretch reads EVGKTV. Position 16 (Thr16) interacts with Mg(2+). Lys37 is a catalytic residue. Residue Ser41 coordinates substrate. ATP-binding positions include Asp51, 112–115, and 202–204; these read EGAG and PKL. Asp51 and Glu112 together coordinate Mg(2+).

It belongs to the dethiobiotin synthetase family. As to quaternary structure, homodimer. The cofactor is Mg(2+).

Its subcellular location is the cytoplasm. It carries out the reaction (7R,8S)-7,8-diammoniononanoate + CO2 + ATP = (4R,5S)-dethiobiotin + ADP + phosphate + 3 H(+). Its pathway is cofactor biosynthesis; biotin biosynthesis; biotin from 7,8-diaminononanoate: step 1/2. Catalyzes a mechanistically unusual reaction, the ATP-dependent insertion of CO2 between the N7 and N8 nitrogen atoms of 7,8-diaminopelargonic acid (DAPA, also called 7,8-diammoniononanoate) to form a ureido ring. This is ATP-dependent dethiobiotin synthetase BioD from Bacillus subtilis subsp. natto.